A 292-amino-acid polypeptide reads, in one-letter code: Secreted frizzled-related protein 2 (292 aa).

An N-terminal signal peptide occupies residues 1-20; it reads MPRRLCALLLLASQCLGSTA. Positions 32 to 152 constitute an FZ domain; it reads YKRSNCKPIP…PKDNDLCIPL (121 aa). Intrachain disulfides connect Cys-37-Cys-100, Cys-47-Cys-93, Cys-84-Cys-122, Cys-111-Cys-149, Cys-115-Cys-139, Cys-169-Cys-242, and Cys-187-Cys-292. The NTR domain maps to 169–292; it reads CDACKNKNED…FSRSIRKLQC (124 aa).

The protein belongs to the secreted frizzled-related protein (sFRP) family.

The protein resides in the secreted. Its function is as follows. Soluble frizzled-related proteins (sFRPS) function as modulators of Wnt signaling through direct interaction with Wnts. They have a role in regulating cell growth and differentiation in specific cell types. SFRP2 appears to be associated with myogenesis. The sequence is that of Secreted frizzled-related protein 2 (SFRP2) from Gallus gallus (Chicken).